Reading from the N-terminus, the 63-residue chain is Large ribosomal subunit protein uL30 (63 aa).

This sequence belongs to the universal ribosomal protein uL30 family. As to quaternary structure, part of the 50S ribosomal subunit.

The sequence is that of Large ribosomal subunit protein uL30 from Coxiella burnetii (strain CbuK_Q154) (Coxiella burnetii (strain Q154)).